The following is a 311-amino-acid chain: Malate dehydrogenase (311 aa).

NAD(+)-binding positions include 7–13 (GAAGGIG) and Asp-34. The substrate site is built by Arg-81 and Arg-87. NAD(+) is bound by residues Asn-94 and 117 to 119 (ITN). Substrate contacts are provided by Asn-119 and Arg-153. The active-site Proton acceptor is His-177. Met-227 is an NAD(+) binding site.

It belongs to the LDH/MDH superfamily. MDH type 1 family. As to quaternary structure, homodimer.

It carries out the reaction (S)-malate + NAD(+) = oxaloacetate + NADH + H(+). Functionally, catalyzes the reversible oxidation of malate to oxaloacetate. The polypeptide is Malate dehydrogenase (mdh) (Vibrio cholerae serotype O1 (strain ATCC 39315 / El Tor Inaba N16961)).